The following is a 438-amino-acid chain: Na(+)/H(+) antiporter NhaA (438 aa).

The next 11 membrane-spanning stretches (helical) occupy residues 23–43 (FGGI…NSFL), 62–82 (FFIG…LFFL), 104–124 (SFPV…YFFL), 133–153 (GFGI…MLLG), 162–182 (VFLI…IALF), 185–205 (TNLK…LALL), 221–241 (VLLW…AVVL), 302–322 (FLAP…NAGV), 337–357 (FGVI…ITFI), 372–392 (WWHI…SMFI), and 410–430 (IAIL…LFAL).

It belongs to the NhaA Na(+)/H(+) (TC 2.A.33) antiporter family.

The protein resides in the cell inner membrane. The enzyme catalyses Na(+)(in) + 2 H(+)(out) = Na(+)(out) + 2 H(+)(in). Na(+)/H(+) antiporter that extrudes sodium in exchange for external protons. This Helicobacter pylori (strain P12) protein is Na(+)/H(+) antiporter NhaA.